The primary structure comprises 397 residues: N-acetyllactosaminide beta-1,3-N-acetylglucosaminyltransferase 2 (397 aa).

Residues 1 to 7 (MSVGRRR) are Cytoplasmic-facing. Residues 8 to 28 (IKLLGILMMANVFIYFIMEVS) form a helical; Signal-anchor for type II membrane protein membrane-spanning segment. At 29 to 397 (KSSSQEKNGK…SQLQSAHLKC (369 aa)) the chain is on the lumenal side. N-linked (GlcNAc...) asparagine glycans are attached at residues Asn-79, Asn-89, Asn-127, Asn-173, and Asn-219.

The protein belongs to the glycosyltransferase 31 family. Interacts with B3GNT8; this interaction greatly increases B3GNT2 catalytic activity, independently of B3GNT8 enzymatic activity. Mn(2+) is required as a cofactor. In terms of tissue distribution, ubiquitous.

It is found in the golgi apparatus membrane. The enzyme catalyses a beta-D-galactosyl-(1-&gt;4)-N-acetyl-beta-D-glucosaminyl derivative + UDP-N-acetyl-alpha-D-glucosamine = an N-acetyl-beta-D-glucosaminyl-(1-&gt;3)-beta-D-galactosyl-(1-&gt;4)-N-acetyl-beta-D-glucosaminyl derivative + UDP + H(+). It participates in protein modification; protein glycosylation. Functionally, beta-1,3-N-acetylglucosaminyltransferase involved in the synthesis of poly-N-acetyllactosamine. Catalyzes the initiation and elongation of poly-N-acetyllactosamine chains. Shows a marked preference for Gal(beta1-4)Glc(NAc)-based acceptors. Probably constitutes the main polylactosamine synthase. This Homo sapiens (Human) protein is N-acetyllactosaminide beta-1,3-N-acetylglucosaminyltransferase 2 (B3GNT2).